Consider the following 114-residue polypeptide: Ghrelin (114 aa).

Positions 1–24 (MNFGKAAIFGVVLFCLLWTEGAQA) are cleaved as a signal peptide. The O-decanoyl threonine; alternate moiety is linked to residue Thr-27. The O-octanoyl threonine; alternate moiety is linked to residue Thr-27. The propeptide at 55–114 (GVEDDLAGEEIGVTFPLDMKMTQEQFQKQRAAVQDFLYSSLLSLGSVQDTEDKNENPQSQ) is removed in mature form.

This sequence belongs to the motilin family. O-octanoylated by GOAT/MBOAT4. O-octanoylation or O-decanoylation is essential for activity. The O-decanoylated form ghrelin-27-C10 differs in the length of the carbon backbone of the carboxylic acid bound to Thr-27. 33% of frog ghrelin is O-decanoylated. Post-translationally, 80% of frog ghrelin has Asn-52 cleaved from its C-terminus giving rise to ghrelin-27. As to expression, high levels in stomach. Moderate levels in small intestine, pancreas and testis. Low levels in heart, lung and gall bladder.

The protein localises to the secreted. Functionally, ligand for growth hormone secretagogue receptor type 1 (GHSR). Induces the release of growth hormone from the pituitary. Has an appetite-stimulating effect, induces adiposity and stimulates gastric acid secretion. Involved in growth regulation. The polypeptide is Ghrelin (GHRL) (Aquarana catesbeiana (American bullfrog)).